Here is a 274-residue protein sequence, read N- to C-terminus: Large ribosomal subunit protein uL2 (274 aa).

Positions 214 to 274 (LGRRPRTRPV…NKYIVERRKK (61 aa)) are disordered.

The protein belongs to the universal ribosomal protein uL2 family. In terms of assembly, part of the 50S ribosomal subunit. Forms a bridge to the 30S subunit in the 70S ribosome.

One of the primary rRNA binding proteins. Required for association of the 30S and 50S subunits to form the 70S ribosome, for tRNA binding and peptide bond formation. It has been suggested to have peptidyltransferase activity; this is somewhat controversial. Makes several contacts with the 16S rRNA in the 70S ribosome. The chain is Large ribosomal subunit protein uL2 from Flavobacterium johnsoniae (strain ATCC 17061 / DSM 2064 / JCM 8514 / BCRC 14874 / CCUG 350202 / NBRC 14942 / NCIMB 11054 / UW101) (Cytophaga johnsonae).